The primary structure comprises 230 residues: MYENTNSEENNNNIQSQNMDIQKFKKYIRTEKKADERPKVIVMGRSNVGKSTFVKLVTGKNVRVGKKPGVTLKITEYDMGTYILVDLPGFGFMEGIEKKAQEKIKDEIIHYVEDNKDAIAASIHILDAKSFIDIVERWGNKGEVPIDLEMADFLEELELNPIFVVNKMDKIKNSEWDNHLDKVSETLGFLPPWRQWLDNFVPAIMRDNYGIDGIKHRINKRINIFKKSKK.

The 189-residue stretch at 36-224 (ERPKVIVMGR…KHRINKRINI (189 aa)) folds into the EngB-type G domain. GTP is bound by residues 44–51 (GRSNVGKS), 69–73 (GVTLK), 86–89 (DLPG), 166–169 (NKMD), and 201–203 (VPA). Residues serine 51 and threonine 71 each coordinate Mg(2+).

It belongs to the TRAFAC class TrmE-Era-EngA-EngB-Septin-like GTPase superfamily. EngB GTPase family. Requires Mg(2+) as cofactor.

In terms of biological role, necessary for normal cell division and for the maintenance of normal septation. This chain is Probable GTP-binding protein EngB, found in Methanococcus maripaludis (strain DSM 14266 / JCM 13030 / NBRC 101832 / S2 / LL).